A 1453-amino-acid polypeptide reads, in one-letter code: MEDDCEELQVPVGTLTSIGFSISNNNDRDKMSVLEVEAPNQVTDSRLGLPNPDSVCRTCGSKDRKVCEGHFGVINFAYSIINPYFLKEVAALLNKICPGCKYIRKKQFQITEDQPERCRYCTLNTGYPLMKFRVTTKEVFRRSGIVVEVNEESLMKLKKRGVLTLPPDYWSFLPQDSNIDESCLKPTRRIITHAQVYALLLGIDQRLIKKDIPMFNSLGLTSFPVTPNGYRVTEIVHQFNGARLIFDERTRIYKKLVGFEGNTLELSSRVMECMQYSRLFSETVSSSKDSANPYQKKSDTPKLCGLRFMKDVLLGKRSDHTFRTVVVGDPSLKLNEIGIPESIAKRLQVSEHLNQCNKERLVTSFVPTLLDNKEMHVRRGDRLVAIQVNDLQTGDKIFRSLMDGDTVLMNRPPSIHQHSLIAMTVRILPTTSVVSLNPICCLPFRGDFDGDCLHGYVPQSIQAKVELDELVALDKQLINRQNGRNLLSLGQDSLTAAYLVNVEKNCYLNRAQMQQLQMYCPFQLPPPAIIKASPSSTEPQWTGMQLFGMLFPPGFDYTYPLNNVVVSNGELLSFSEGSAWLRDGEGNFIERLLKHDKGKVLDIIYSAQEMLSQWLLMRGLSVSLADLYLSSDLQSRKNLTEEISYGLREAEQVCNKQQLMVESWRDFLAVNGEDKEEDSVSDLARFCYERQKSATLSELAVSAFKDAYRDVQALAYRYGDQSNSFLIMSKAGSKGNIGKLVQHSMCIGLQNSAVSLSFGFPRELTCAAWNDPNSPLRGAKGKDSTTTESYVPYGVIENSFLTGLNPLESFVHSVTSRDSSFSGNADLPGTLSRRLMFFMRDIYAAYDGTVRNSFGNQLVQFTYETDGPVEDITGEALGSLSACALSEAAYSALDQPISLLETSPLLNLKNVLECGSKKGQREQTMSLYLSEYLSKKKHGFEYGSLEIKNHLEKLSFSEIVSTSMIIFSPSSNTKVPLSPWVCHFHISEKVLKRKQLSAESVVSSLNEQYKSRNRELKLDIVDLDIQNTNHCSSDDQAMKDDNVCITVTVVEASKHSVLELDAIRLVLIPFLLDSPVKGDQGIKKVNILWTDRPKAPKRNGNHLAGELYLKVTMYGDRGKRNCWTALLETCLPIMDMIDWGRSHPDNIRQCCSVYGIDAGRSIFVANLESAVSDTGKEILREHLLLVADSLSVTGEFVALNAKGWSKQRQVESTPAPFTQACFSSPSQCFLKAAKEGVRDDLQGSIDALAWGKVPGFGTGDQFEIIISPKVHGFTTPVDVYDLLSSTKTMRRTNSAPKSDKATVQPFGLLHSAFLKDIKVLDGKGIPMSLLRTIFTWKNIELLSQSLKRILHSYEINELLNERDEGLVKMVLQLHPNSVEKIGPGVKGIRVAKSKHGDSCCFEVVRIDGTFEDFSYHKCVLGATKIIAPKKMNFYKSKYLKNGTLESGGFSENP.

Residues cysteine 56, cysteine 59, cysteine 67, histidine 70, cysteine 97, cysteine 100, and cysteine 121 each contribute to the Zn(2+) site. Residues aspartate 447, aspartate 449, and aspartate 451 each coordinate Mg(2+). The bridging helix stretch occupies residues 806–818; that stretch reads PLESFVHSVTSRD.

This sequence belongs to the RNA polymerase beta' chain family. Component of the RNA polymerase IV complex. Interacts with NRPD2, NRPD3, NRPD3B, NRPD4, NRPD5, NRPD5B, NRPD6A, NRPD7, NRPD7B, NRPD9A, NRPD9B, NRPD10, NRPD11, NRPD12, RDR2, RDM4, CLSY1, CLSY2, CLSY3, CLSY4 and SHH1. Mostly expressed in flowers, and, to a lower extent, in leaves.

The protein localises to the nucleus. It carries out the reaction RNA(n) + a ribonucleoside 5'-triphosphate = RNA(n+1) + diphosphate. Functionally, DNA-dependent RNA polymerase catalyzes the transcription of DNA into RNA using the four ribonucleoside triphosphates as substrates. Largest and catalytic component of RNA polymerase IV which mediates 24-nt short-interfering RNAs (siRNA) accumulation. Implicated in siRNA-directed heterochromatin formation through the action of DCL3 and AGO4, and subsequent DNA methylation-dependent silencing of targeted sequences. Essential component of a self-reinforcing loop coupling de novo DNA methylation to siRNA production. Required for intercellular but not intracellular RNA interference (RNAi) leading to systemic post-transcriptional gene silencing. Involved in the maintenance of post-transcriptional RNA silencing. The chain is DNA-directed RNA polymerase IV subunit 1 (NRPD1) from Arabidopsis thaliana (Mouse-ear cress).